A 404-amino-acid polypeptide reads, in one-letter code: Acetylornithine/succinyldiaminopimelate aminotransferase (404 aa).

Residues 108-109 (GA) and Phe141 each bind pyridoxal 5'-phosphate. Arg144 contributes to the N(2)-acetyl-L-ornithine binding site. Residue 226 to 229 (DEIQ) coordinates pyridoxal 5'-phosphate. At Lys255 the chain carries N6-(pyridoxal phosphate)lysine. Thr283 is a N(2)-acetyl-L-ornithine binding site. Thr284 contributes to the pyridoxal 5'-phosphate binding site.

The protein belongs to the class-III pyridoxal-phosphate-dependent aminotransferase family. ArgD subfamily. As to quaternary structure, homodimer. Pyridoxal 5'-phosphate serves as cofactor.

It is found in the cytoplasm. The enzyme catalyses N(2)-acetyl-L-ornithine + 2-oxoglutarate = N-acetyl-L-glutamate 5-semialdehyde + L-glutamate. The catalysed reaction is N-succinyl-(2S,6S)-2,6-diaminopimelate + 2-oxoglutarate = (S)-2-succinylamino-6-oxoheptanedioate + L-glutamate. It participates in amino-acid biosynthesis; L-arginine biosynthesis; N(2)-acetyl-L-ornithine from L-glutamate: step 4/4. The protein operates within amino-acid biosynthesis; L-lysine biosynthesis via DAP pathway; LL-2,6-diaminopimelate from (S)-tetrahydrodipicolinate (succinylase route): step 2/3. Functionally, involved in both the arginine and lysine biosynthetic pathways. The chain is Acetylornithine/succinyldiaminopimelate aminotransferase from Buchnera aphidicola subsp. Schizaphis graminum (strain Sg).